Consider the following 208-residue polypeptide: Uracil phosphoribosyltransferase (208 aa).

5-phospho-alpha-D-ribose 1-diphosphate-binding positions include Arg78, Arg103, and 130–138 (DPMLATGGS). Uracil-binding positions include Ile193 and 198 to 200 (GDA). Asp199 is a 5-phospho-alpha-D-ribose 1-diphosphate binding site.

The protein belongs to the UPRTase family. Requires Mg(2+) as cofactor.

It catalyses the reaction UMP + diphosphate = 5-phospho-alpha-D-ribose 1-diphosphate + uracil. The protein operates within pyrimidine metabolism; UMP biosynthesis via salvage pathway; UMP from uracil: step 1/1. Its activity is regulated as follows. Allosterically activated by GTP. Catalyzes the conversion of uracil and 5-phospho-alpha-D-ribose 1-diphosphate (PRPP) to UMP and diphosphate. The polypeptide is Uracil phosphoribosyltransferase (Shewanella sediminis (strain HAW-EB3)).